Here is a 198-residue protein sequence, read N- to C-terminus: 3-isopropylmalate dehydratase small subunit (198 aa).

The protein belongs to the LeuD family. LeuD type 1 subfamily. As to quaternary structure, heterodimer of LeuC and LeuD.

It carries out the reaction (2R,3S)-3-isopropylmalate = (2S)-2-isopropylmalate. It participates in amino-acid biosynthesis; L-leucine biosynthesis; L-leucine from 3-methyl-2-oxobutanoate: step 2/4. Its function is as follows. Catalyzes the isomerization between 2-isopropylmalate and 3-isopropylmalate, via the formation of 2-isopropylmaleate. The chain is 3-isopropylmalate dehydratase small subunit from Corynebacterium jeikeium (strain K411).